A 362-amino-acid chain; its full sequence is Phosphoserine aminotransferase (362 aa).

L-glutamate is bound by residues Ser-9 and Arg-42. Pyridoxal 5'-phosphate-binding positions include Gly-76–Arg-77, Trp-102, Thr-153, Asp-174, and Gln-197. Lys-198 is modified (N6-(pyridoxal phosphate)lysine). A pyridoxal 5'-phosphate-binding site is contributed by Asn-239 to Thr-240.

The protein belongs to the class-V pyridoxal-phosphate-dependent aminotransferase family. SerC subfamily. In terms of assembly, homodimer. The cofactor is pyridoxal 5'-phosphate.

Its subcellular location is the cytoplasm. It catalyses the reaction O-phospho-L-serine + 2-oxoglutarate = 3-phosphooxypyruvate + L-glutamate. The enzyme catalyses 4-(phosphooxy)-L-threonine + 2-oxoglutarate = (R)-3-hydroxy-2-oxo-4-phosphooxybutanoate + L-glutamate. It participates in amino-acid biosynthesis; L-serine biosynthesis; L-serine from 3-phospho-D-glycerate: step 2/3. The protein operates within cofactor biosynthesis; pyridoxine 5'-phosphate biosynthesis; pyridoxine 5'-phosphate from D-erythrose 4-phosphate: step 3/5. Catalyzes the reversible conversion of 3-phosphohydroxypyruvate to phosphoserine and of 3-hydroxy-2-oxo-4-phosphonooxybutanoate to phosphohydroxythreonine. The polypeptide is Phosphoserine aminotransferase (Escherichia coli O127:H6 (strain E2348/69 / EPEC)).